A 424-amino-acid polypeptide reads, in one-letter code: Dihydroorotase (424 aa).

Residues H61 and H63 each contribute to the Zn(2+) site. Residues 63–65 (HLR) and N95 contribute to the substrate site. Residues D153, H180, and H233 each contribute to the Zn(2+) site. Position 279 (N279) interacts with substrate. Residue D306 participates in Zn(2+) binding. Residue D306 is part of the active site. Residue H310 coordinates substrate.

It belongs to the metallo-dependent hydrolases superfamily. DHOase family. Class I DHOase subfamily. Zn(2+) is required as a cofactor.

It catalyses the reaction (S)-dihydroorotate + H2O = N-carbamoyl-L-aspartate + H(+). The protein operates within pyrimidine metabolism; UMP biosynthesis via de novo pathway; (S)-dihydroorotate from bicarbonate: step 3/3. In terms of biological role, catalyzes the reversible cyclization of carbamoyl aspartate to dihydroorotate. This chain is Dihydroorotase, found in Citrifermentans bemidjiense (strain ATCC BAA-1014 / DSM 16622 / JCM 12645 / Bem) (Geobacter bemidjiensis).